A 121-amino-acid polypeptide reads, in one-letter code: Putative membrane protein insertion efficiency factor (121 aa).

This sequence belongs to the UPF0161 family.

The protein resides in the cell inner membrane. In terms of biological role, could be involved in insertion of integral membrane proteins into the membrane. The protein is Putative membrane protein insertion efficiency factor of Rhodopseudomonas palustris (strain HaA2).